Consider the following 499-residue polypeptide: Bifunctional purine biosynthesis protein PurH (499 aa).

Residues Met1–Thr144 form the MGS-like domain.

It belongs to the PurH family.

The enzyme catalyses (6R)-10-formyltetrahydrofolate + 5-amino-1-(5-phospho-beta-D-ribosyl)imidazole-4-carboxamide = 5-formamido-1-(5-phospho-D-ribosyl)imidazole-4-carboxamide + (6S)-5,6,7,8-tetrahydrofolate. The catalysed reaction is IMP + H2O = 5-formamido-1-(5-phospho-D-ribosyl)imidazole-4-carboxamide. It functions in the pathway purine metabolism; IMP biosynthesis via de novo pathway; 5-formamido-1-(5-phospho-D-ribosyl)imidazole-4-carboxamide from 5-amino-1-(5-phospho-D-ribosyl)imidazole-4-carboxamide (10-formyl THF route): step 1/1. Its pathway is purine metabolism; IMP biosynthesis via de novo pathway; IMP from 5-formamido-1-(5-phospho-D-ribosyl)imidazole-4-carboxamide: step 1/1. This chain is Bifunctional purine biosynthesis protein PurH, found in Clostridium botulinum (strain Hall / ATCC 3502 / NCTC 13319 / Type A).